The primary structure comprises 166 residues: Urease accessory protein UreE (166 aa).

It belongs to the UreE family.

It localises to the cytoplasm. Its function is as follows. Involved in urease metallocenter assembly. Binds nickel. Probably functions as a nickel donor during metallocenter assembly. The sequence is that of Urease accessory protein UreE from Pseudomonas fluorescens (strain Pf0-1).